Reading from the N-terminus, the 1883-residue chain is DDB1- and CUL4-associated factor homolog 1 (1883 aa).

Disordered regions lie at residues 1-47 and 309-340; these read MDGQ…QSVE and KPGDDNSVRDDPSRHRLNRSKSRGRGRVHEGA. Acidic residues predominate over residues 37–47; that stretch reads NPEEGEEQSVE. The segment covering 309–322 has biased composition (basic and acidic residues); sequence KPGDDNSVRDDPSR. Residues 323–334 show a composition bias toward basic residues; sequence HRLNRSKSRGRG. At S349 the chain carries Phosphoserine. The disordered stretch occupies residues 882 to 924; that stretch reads NKPPLAQNHQPVPGQATTRPSTDVAVGTQSTGNAPQTPVAPAS. Residues 888–917 are compositionally biased toward polar residues; the sequence is QNHQPVPGQATTRPSTDVAVGTQSTGNAPQ. Residues 1087–1119 enclose the LisH domain; the sequence is DSKELLLLIHEHLQASGLGDTASALLKEAQLTP. 3 disordered regions span residues 1157–1202, 1214–1260, and 1310–1377; these read TSKP…QWPS, PKIN…ALPQ, and SELR…NPER. Over residues 1238–1251 the composition is skewed to low complexity; sequence LTFSPSFSSQSRKQ. Residues 1310–1329 show a composition bias toward basic and acidic residues; sequence SELRDSSVPGKRIDLGERRN. A compositionally biased stretch (polar residues) spans 1330–1362; sequence STFADGSGLQTPASALDANQSGSSRLGQMTPAS. WD repeat units follow at residues 1464–1503, 1506–1546, 1548–1586, 1587–1626, and 1633–1671; these read DETALFTCIALLGGTNHIAVGSHAGEIKIFEASSGSMLES, GHQA…GGPR, SFDGCKAAKFSNSGLQFAALSCEASRKDVLLYDVQTCSP, CQKLTDTVTSSRSNPYSLVHFSPCDTLILWNGVLWDRRIP, and DQFTDYGGGGFHPSRNEVIINSEIWDMRTFKLLRSVPSL. Short sequence motifs (DWD box) lie at residues 1619 to 1626 and 1655 to 1662; these read VLWDRRIP and EIWDMRTF. Residues 1763 to 1883 are disordered; the sequence is YEIGRRRPTD…DDYRDNIRSS (121 aa). Composition is skewed to acidic residues over residues 1773 to 1796 and 1808 to 1864; these read DDSDPDDDDETEDEDEDDEEEDDL and DSGD…DGEM.

This sequence belongs to the VPRBP/DCAF1 family. Component of the CUL4-RBX1-DDB1-DCAF1 E3 ubiquitin-protein ligase complex. Interacts with DDB1A through its DWD motifs. In terms of tissue distribution, ubiquitous but predominantly expressed in the inflorescence and roots.

It localises to the nucleus. Its pathway is protein modification; protein ubiquitination. Functionally, component of the CUL4-RBX1-DDB1-DCAF1 E3 ubiquitin-protein ligase complex, DCAF1 may function as the substrate recognition module within this complex. Appears to be required for plant embryogenesis and to affect several other developmental processes including leaf, shoot, and flower development. This Arabidopsis thaliana (Mouse-ear cress) protein is DDB1- and CUL4-associated factor homolog 1 (DCAF1).